Here is a 93-residue protein sequence, read N- to C-terminus: Small ribosomal subunit protein uS19 (93 aa).

Belongs to the universal ribosomal protein uS19 family.

In terms of biological role, protein S19 forms a complex with S13 that binds strongly to the 16S ribosomal RNA. This Salinispora tropica (strain ATCC BAA-916 / DSM 44818 / JCM 13857 / NBRC 105044 / CNB-440) protein is Small ribosomal subunit protein uS19.